Reading from the N-terminus, the 154-residue chain is SsrA-binding protein (154 aa).

It belongs to the SmpB family.

The protein localises to the cytoplasm. Functionally, required for rescue of stalled ribosomes mediated by trans-translation. Binds to transfer-messenger RNA (tmRNA), required for stable association of tmRNA with ribosomes. tmRNA and SmpB together mimic tRNA shape, replacing the anticodon stem-loop with SmpB. tmRNA is encoded by the ssrA gene; the 2 termini fold to resemble tRNA(Ala) and it encodes a 'tag peptide', a short internal open reading frame. During trans-translation Ala-aminoacylated tmRNA acts like a tRNA, entering the A-site of stalled ribosomes, displacing the stalled mRNA. The ribosome then switches to translate the ORF on the tmRNA; the nascent peptide is terminated with the 'tag peptide' encoded by the tmRNA and targeted for degradation. The ribosome is freed to recommence translation, which seems to be the essential function of trans-translation. The sequence is that of SsrA-binding protein from Staphylococcus aureus (strain Mu3 / ATCC 700698).